The sequence spans 279 residues: Undecaprenyl-diphosphatase (279 aa).

8 helical membrane passes run 2–22, 44–64, 85–105, 113–133, 163–183, 188–208, 223–243, and 255–275; these read LIIE…TEWL, AFIE…VMLI, WQLW…AVPL, FYFM…FIWI, VLSI…AIIL, TVAA…YSGL, AQVL…LLAI, and FTIF…YSFF.

This sequence belongs to the UppP family.

It is found in the cell membrane. It catalyses the reaction di-trans,octa-cis-undecaprenyl diphosphate + H2O = di-trans,octa-cis-undecaprenyl phosphate + phosphate + H(+). Its function is as follows. Catalyzes the dephosphorylation of undecaprenyl diphosphate (UPP). Confers resistance to bacitracin. The sequence is that of Undecaprenyl-diphosphatase from Streptococcus pyogenes serotype M12 (strain MGAS2096).